The chain runs to 189 residues: Hypoxanthine/guanine phosphoribosyltransferase (189 aa).

This sequence belongs to the purine/pyrimidine phosphoribosyltransferase family. Archaeal HPRT subfamily. As to quaternary structure, homodimer.

The protein localises to the cytoplasm. It carries out the reaction IMP + diphosphate = hypoxanthine + 5-phospho-alpha-D-ribose 1-diphosphate. The catalysed reaction is GMP + diphosphate = guanine + 5-phospho-alpha-D-ribose 1-diphosphate. Its pathway is purine metabolism; IMP biosynthesis via salvage pathway; IMP from hypoxanthine: step 1/1. Functionally, catalyzes a salvage reaction resulting in the formation of IMP that is energically less costly than de novo synthesis. The chain is Hypoxanthine/guanine phosphoribosyltransferase from Methanothrix soehngenii (strain ATCC 5969 / DSM 3671 / JCM 10134 / NBRC 103675 / OCM 69 / GP-6) (Methanosaeta concilii).